We begin with the raw amino-acid sequence, 385 residues long: 1-deoxy-D-xylulose 5-phosphate reductoisomerase (385 aa).

Positions 10, 11, 12, 13, 36, 38, and 124 each coordinate NADPH. Residue K125 participates in 1-deoxy-D-xylulose 5-phosphate binding. E126 provides a ligand contact to NADPH. Residue D150 coordinates Mn(2+). 1-deoxy-D-xylulose 5-phosphate-binding residues include S151, E152, S176, and H198. Position 152 (E152) interacts with Mn(2+). G204 contributes to the NADPH binding site. Residues S211, N216, K217, and E220 each contribute to the 1-deoxy-D-xylulose 5-phosphate site. A Mn(2+)-binding site is contributed by E220.

This sequence belongs to the DXR family. It depends on Mg(2+) as a cofactor. Mn(2+) serves as cofactor.

The catalysed reaction is 2-C-methyl-D-erythritol 4-phosphate + NADP(+) = 1-deoxy-D-xylulose 5-phosphate + NADPH + H(+). It functions in the pathway isoprenoid biosynthesis; isopentenyl diphosphate biosynthesis via DXP pathway; isopentenyl diphosphate from 1-deoxy-D-xylulose 5-phosphate: step 1/6. Its function is as follows. Catalyzes the NADPH-dependent rearrangement and reduction of 1-deoxy-D-xylulose-5-phosphate (DXP) to 2-C-methyl-D-erythritol 4-phosphate (MEP). The protein is 1-deoxy-D-xylulose 5-phosphate reductoisomerase of Endomicrobium trichonymphae.